The primary structure comprises 490 residues: uncharacterized protein (490 aa).

Residues Val27–Ile47 form a helical membrane-spanning segment.

The protein localises to the membrane. This is an uncharacterized protein from Borreliella burgdorferi (strain ATCC 35210 / DSM 4680 / CIP 102532 / B31) (Borrelia burgdorferi).